We begin with the raw amino-acid sequence, 136 residues long: Small ribosomal subunit protein uS8 (136 aa).

The protein belongs to the universal ribosomal protein uS8 family. Part of the 30S ribosomal subunit. Contacts proteins S5 and S12.

In terms of biological role, one of the primary rRNA binding proteins, it binds directly to 16S rRNA central domain where it helps coordinate assembly of the platform of the 30S subunit. The protein is Small ribosomal subunit protein uS8 of Frankia alni (strain DSM 45986 / CECT 9034 / ACN14a).